We begin with the raw amino-acid sequence, 398 residues long: Exodeoxyribonuclease 7 large subunit (398 aa).

It belongs to the XseA family. In terms of assembly, heterooligomer composed of large and small subunits.

The protein localises to the cytoplasm. The enzyme catalyses Exonucleolytic cleavage in either 5'- to 3'- or 3'- to 5'-direction to yield nucleoside 5'-phosphates.. Functionally, bidirectionally degrades single-stranded DNA into large acid-insoluble oligonucleotides, which are then degraded further into small acid-soluble oligonucleotides. This chain is Exodeoxyribonuclease 7 large subunit, found in Salinibacter ruber (strain DSM 13855 / M31).